The chain runs to 1210 residues: AF4/FMR2 family member 1 (1210 aa).

Disordered stretches follow at residues 1–45 (MAAQ…GEPY), 73–314 (TKSH…KPLP), 366–957 (SWPP…KPQV), and 1098–1119 (TGTP…SQSS). Basic and acidic residues-rich tracts occupy residues 9 to 35 (NDDR…EAFP) and 78 to 87 (HRLDASENRL). Phosphoserine occurs at positions 199, 206, and 212. Polar residues predominate over residues 215–238 (HSNQQTLPRTQGSSKVHGSSNNSK). At threonine 220 the chain carries Phosphothreonine. Over residues 245–259 (SPKDLAVKVHDKETP) the composition is skewed to basic and acidic residues. The span at 267–279 (AQPPSQTFPPPSL) shows a compositional bias: pro residues. Positions 394–419 (HVSSVTQNQKQYDTSSKTHSNSQQGT) are enriched in polar residues. A compositionally biased stretch (acidic residues) spans 423-439 (LEDDLQLSDSEDSDSEQ). Over residues 442–453 (EKPPSSSAPPSA) the composition is skewed to pro residues. A compositionally biased stretch (low complexity) spans 454-472 (PQSLPEPVASAHSSSAESE). Positions 473–497 (STSDSDSSSDSESESSSSDSEENEP) are enriched in acidic residues. Residues 536-546 (EPPRRHPESKG) show a composition bias toward basic and acidic residues. Residues 586 to 602 (QKSPAQQEPPQRQTVGT) are compositionally biased toward polar residues. Serine 588 bears the Phosphoserine mark. Lysine 681 is subject to N6-acetyllysine. A compositionally biased stretch (basic and acidic residues) spans 688–699 (PAKDNVEDRTPE). Residue threonine 697 is modified to Phosphothreonine. Positions 707-724 (TESQGPPHSGSGSRTSGC) are enriched in polar residues. Residues 732–747 (EDSRKDRLPLPLRDTK) show a composition bias toward basic and acidic residues. Serine 750 bears the Phosphoserine mark. Position 755 is a phosphothreonine (threonine 755). Residues 816-834 (GEAERDCDNKKIRLEKEIK) are compositionally biased toward basic and acidic residues. Low complexity predominate over residues 871 to 880 (SSSSQKPAKP). Positions 906 to 932 (NHKDSSIPKQRRVEGKGSRSSSEHKGS) are enriched in basic and acidic residues. Residues 1110–1119 (PASSVGSQSS) show a composition bias toward low complexity.

The protein belongs to the AF4 family. Component of the super elongation complex (SEC), at least composed of EAF1, EAF2, CDK9, MLLT3/AF9, AFF (AFF1 or AFF4), the P-TEFb complex and ELL (ELL, ELL2 or ELL3).

The protein resides in the nucleus. The polypeptide is AF4/FMR2 family member 1 (AFF1) (Homo sapiens (Human)).